A 180-amino-acid chain; its full sequence is Large ribosomal subunit protein uL6 (180 aa).

It belongs to the universal ribosomal protein uL6 family. In terms of assembly, part of the 50S ribosomal subunit.

Functionally, this protein binds to the 23S rRNA, and is important in its secondary structure. It is located near the subunit interface in the base of the L7/L12 stalk, and near the tRNA binding site of the peptidyltransferase center. The chain is Large ribosomal subunit protein uL6 from Borrelia turicatae (strain 91E135).